The chain runs to 227 residues: 7-cyano-7-deazaguanine synthase (227 aa).

11–21 (VSGGMDSAALL) lines the ATP pocket. Residues C192, C200, C203, and C206 each coordinate Zn(2+).

The protein belongs to the QueC family. Zn(2+) is required as a cofactor.

The enzyme catalyses 7-carboxy-7-deazaguanine + NH4(+) + ATP = 7-cyano-7-deazaguanine + ADP + phosphate + H2O + H(+). It participates in purine metabolism; 7-cyano-7-deazaguanine biosynthesis. Catalyzes the ATP-dependent conversion of 7-carboxy-7-deazaguanine (CDG) to 7-cyano-7-deazaguanine (preQ(0)). In Persephonella marina (strain DSM 14350 / EX-H1), this protein is 7-cyano-7-deazaguanine synthase.